A 453-amino-acid polypeptide reads, in one-letter code: UDP-N-acetylmuramoylalanine--D-glutamate ligase (453 aa).

115-121 (GTNGKTT) provides a ligand contact to ATP.

It belongs to the MurCDEF family.

It localises to the cytoplasm. The enzyme catalyses UDP-N-acetyl-alpha-D-muramoyl-L-alanine + D-glutamate + ATP = UDP-N-acetyl-alpha-D-muramoyl-L-alanyl-D-glutamate + ADP + phosphate + H(+). Its pathway is cell wall biogenesis; peptidoglycan biosynthesis. In terms of biological role, cell wall formation. Catalyzes the addition of glutamate to the nucleotide precursor UDP-N-acetylmuramoyl-L-alanine (UMA). This Geotalea uraniireducens (strain Rf4) (Geobacter uraniireducens) protein is UDP-N-acetylmuramoylalanine--D-glutamate ligase.